Consider the following 200-residue polypeptide: Adenylate kinase (200 aa).

Residue 10-15 coordinates ATP; sequence GAGKGT. Residues 30–59 form an NMP region; it reads STGDMLRAAVAAGTPVGLEAKAVMESGGLV. Residues T31, R36, 57–59, 85–88, and Q92 each bind AMP; these read GLV and GFPR. The segment at 126 to 142 is LID; it reads KRAAETLARGQAVRKDD. Position 127 (R127) interacts with ATP. 2 residues coordinate AMP: R139 and R150. Residue Q178 coordinates ATP.

It belongs to the adenylate kinase family. As to quaternary structure, monomer.

It localises to the cytoplasm. It carries out the reaction AMP + ATP = 2 ADP. Its pathway is purine metabolism; AMP biosynthesis via salvage pathway; AMP from ADP: step 1/1. Functionally, catalyzes the reversible transfer of the terminal phosphate group between ATP and AMP. Plays an important role in cellular energy homeostasis and in adenine nucleotide metabolism. This Methylobacterium radiotolerans (strain ATCC 27329 / DSM 1819 / JCM 2831 / NBRC 15690 / NCIMB 10815 / 0-1) protein is Adenylate kinase.